The chain runs to 85 residues: UPF0181 protein YE1782 (85 aa).

Disordered stretches follow at residues Met-1–Gln-22 and Asp-57–Gly-85. Residues Ser-9 to His-21 are compositionally biased toward basic and acidic residues. A compositionally biased stretch (acidic residues) spans Gln-74–Gly-85.

It belongs to the UPF0181 family.

The sequence is that of UPF0181 protein YE1782 from Yersinia enterocolitica serotype O:8 / biotype 1B (strain NCTC 13174 / 8081).